Consider the following 237-residue polypeptide: Homeobox protein Nkx-3.1 (237 aa).

Residues Met1–Ala14 show a composition bias toward basic and acidic residues. Disordered stretches follow at residues Met1–Ser96 and Glu108–Ala130. The span at Pro24–Leu34 shows a compositional bias: polar residues. 2 stretches are compositionally biased toward basic and acidic residues: residues Ile38–Gly47 and Pro57–Gly71. A DNA-binding region (homeobox) is located at residues Gln125–Gln184.

This sequence belongs to the NK-3 homeobox family. As to quaternary structure, interacts with serum response factor (SRF). Interacts with SPDEF. Interacts with WDR77. Interacts with TOPORS which polyubiquitinates NKX3-1 and induces its proteasomal degradation. Interacts with FEM1B. Post-translationally, ubiquitinated by TOPORS; monoubiquitinated at several residues and also polyubiquitinated on single residues. Expressed mostly in the male urogenital tract, with highest expression in the epithelial cells lining the ducts of anterior, dorsolateral and ventral prostate and in the bulbourethral gland, and much lower in the seminal vesicle and the testis. Expression in the prostate increases during sexual maturation and is drastically reduced following castration. Expressed also in brain (hippocampus and external granular layer of the cerebral cortex), kidney (intralobular arteries), thymus and adrenal and salivary glands.

Its subcellular location is the nucleus. Its function is as follows. Transcription factor, which binds preferentially the consensus sequence 5'-TAAGT[AG]-3' and can behave as a transcriptional repressor. Plays an important role in normal prostate development, regulating proliferation of glandular epithelium and in the formation of ducts in prostate. Acts as a tumor suppressor controlling prostate carcinogenesis, as shown by the ability to suppress growth and tumorigenicity of prostate carcinoma cells. Plays a role in the formation of minor salivary glands (particularly palatine and lingual glands). This chain is Homeobox protein Nkx-3.1, found in Mus musculus (Mouse).